We begin with the raw amino-acid sequence, 914 residues long: NADH-quinone oxidoreductase subunit G (914 aa).

The region spanning 1–83 is the 2Fe-2S ferredoxin-type domain; the sequence is MATIHVDGKE…GTFISIDDSE (83 aa). [2Fe-2S] cluster is bound by residues cysteine 34, cysteine 45, cysteine 48, and cysteine 67. The region spanning 83–122 is the 4Fe-4S His(Cys)3-ligated-type domain; it reads EAKAFRESVVEWLMTNHPHDCPVCEEGGNCHLQDMTVMTG. 12 residues coordinate [4Fe-4S] cluster: histidine 99, cysteine 103, cysteine 106, cysteine 112, cysteine 151, cysteine 154, cysteine 157, cysteine 201, cysteine 228, cysteine 231, cysteine 235, and cysteine 263. The 4Fe-4S Mo/W bis-MGD-type domain maps to 221–277; sequence MQFAPSICQQCSVGCNTSPGERYGELRRIENRYNGSVNHYFMCDRGRFGYGYVNLKD.

This sequence belongs to the complex I 75 kDa subunit family. As to quaternary structure, composed of 13 different subunits. Subunits NuoCD, E, F, and G constitute the peripheral sector of the complex. The cofactor is [2Fe-2S] cluster. It depends on [4Fe-4S] cluster as a cofactor.

It carries out the reaction a quinone + NADH + 5 H(+)(in) = a quinol + NAD(+) + 4 H(+)(out). Functionally, NDH-1 shuttles electrons from NADH, via FMN and iron-sulfur (Fe-S) centers, to quinones in the respiratory chain. The immediate electron acceptor for the enzyme in this species is believed to be ubiquinone. Couples the redox reaction to proton translocation (for every two electrons transferred, four hydrogen ions are translocated across the cytoplasmic membrane), and thus conserves the redox energy in a proton gradient. The protein is NADH-quinone oxidoreductase subunit G (nuoG) of Yersinia pestis.